The primary structure comprises 375 residues: Protein kinase MCK1 (375 aa).

Ser2 is modified (N-acetylserine). A Protein kinase domain is found at 35-327 (VKEYRKIGRG…PRRILAHQFF (293 aa)). ATP contacts are provided by residues 41-49 (IGRGAFGTV) and Lys68. Catalysis depends on Asp164, which acts as the Proton acceptor. A Phosphoserine modification is found at Ser198. Tyr199 bears the Phosphotyrosine mark. Ser202 is modified (phosphoserine).

This sequence belongs to the protein kinase superfamily. Ser/Thr protein kinase family. In terms of processing, phosphorylated at tyrosine and serine.

The catalysed reaction is L-seryl-[protein] + ATP = O-phospho-L-seryl-[protein] + ADP + H(+). The enzyme catalyses L-threonyl-[protein] + ATP = O-phospho-L-threonyl-[protein] + ADP + H(+). It catalyses the reaction L-tyrosyl-[protein] + ATP = O-phospho-L-tyrosyl-[protein] + ADP + H(+). Functionally, may be an autophosphorylating tyrosine kinase, a bifunctional (serine/tyrosine-specific) protein kinase, or a serine kinase that is a substrate for an associated tyrosine kinase. MCK1 is a transcriptional activator of IME1, it stimulates spore maturation, and play a positive regulatory role in both mitotic centromere function and activation of early meiotic gene expression. In Saccharomyces cerevisiae (strain ATCC 204508 / S288c) (Baker's yeast), this protein is Protein kinase MCK1 (MCK1).